Reading from the N-terminus, the 186-residue chain is TATA box-binding protein-like 1 (186 aa).

Belongs to the TBP family.

It localises to the cytoplasm. The protein localises to the nucleus. Part of a specialized transcription system that mediates the transcription of most ribosomal proteins through the 5'-TCT-3' motif which is a core promoter element at these genes. Seems to also mediate the transcription of NF1. Does not bind the TATA box. Members of the TBP family are differentially required to regulate transcription and development during early embryogenesis. Particularly regulates genes that have a role in catabolism. This chain is TATA box-binding protein-like 1 (tbpl1), found in Xenopus tropicalis (Western clawed frog).